The chain runs to 309 residues: Isoaspartyl peptidase/L-asparaginase (309 aa).

T166 serves as the catalytic Nucleophile. Residues 194-197 (RVGD) and 217-220 (TGHG) contribute to the substrate site.

This sequence belongs to the Ntn-hydrolase family. As to quaternary structure, heterodimer of an alpha and beta chain produced by autocleavage. Post-translationally, cleaved into an alpha and beta chain by autocatalysis; this activates the enzyme. The N-terminal residue of the beta subunit is responsible for the nucleophile hydrolase activity.

Its subcellular location is the cytoplasm. It carries out the reaction L-asparagine + H2O = L-aspartate + NH4(+). It catalyses the reaction Cleavage of a beta-linked Asp residue from the N-terminus of a polypeptide.. Functionally, has both L-asparaginase and beta-aspartyl peptidase activity. Does not have aspartylglucosaminidase activity and is inactive toward GlcNAc-L-Asn. Likewise, has no activity toward glutamine. This is Isoaspartyl peptidase/L-asparaginase (asrgl1) from Xenopus laevis (African clawed frog).